The sequence spans 305 residues: NAD-dependent protein deacylase SIR4 (305 aa).

A mitochondrion-targeting transit peptide spans 1–10; that stretch reads MSAQVMHNRV. One can recognise a Deacetylase sirtuin-type domain in the interval 11–305; it reads MGTVKDSASK…VLEELASTIR (295 aa). NAD(+)-binding positions include 37–57 and 118–121; these read GAGVSTDSGIPDYRGPQGIYS and QNVD. Residue His-139 is the Proton acceptor of the active site. Cys-147, Cys-150, Cys-209, and Cys-212 together coordinate Zn(2+). NAD(+)-binding positions include 249-251, 275-277, and Ser-293; these read GSS and NLG.

It belongs to the sirtuin family. Class II subfamily. The cofactor is Zn(2+).

Its subcellular location is the mitochondrion matrix. The catalysed reaction is N(6)-acetyl-L-lysyl-[protein] + NAD(+) + H2O = 2''-O-acetyl-ADP-D-ribose + nicotinamide + L-lysyl-[protein]. Functionally, NAD-dependent protein deacylase. Catalyzes the NAD-dependent hydrolysis of acyl groups from lysine residues. This is NAD-dependent protein deacylase SIR4 from Batrachochytrium dendrobatidis (strain JAM81 / FGSC 10211) (Frog chytrid fungus).